We begin with the raw amino-acid sequence, 442 residues long: Proline--tRNA ligase (442 aa).

It belongs to the class-II aminoacyl-tRNA synthetase family. ProS type 2 subfamily. In terms of assembly, homodimer.

The protein localises to the cytoplasm. The catalysed reaction is tRNA(Pro) + L-proline + ATP = L-prolyl-tRNA(Pro) + AMP + diphosphate. In terms of biological role, catalyzes the attachment of proline to tRNA(Pro) in a two-step reaction: proline is first activated by ATP to form Pro-AMP and then transferred to the acceptor end of tRNA(Pro). This Sinorhizobium medicae (strain WSM419) (Ensifer medicae) protein is Proline--tRNA ligase.